Consider the following 338-residue polypeptide: Lipoate-protein ligase A (338 aa).

Positions 29 to 216 constitute a BPL/LPL catalytic domain; sequence PATQRVLFLW…AFFAHYGERV (188 aa). Residues R71, 76-79, and K134 each bind ATP; that span reads GAVF. K134 lines the (R)-lipoate pocket.

The protein belongs to the LplA family. As to quaternary structure, monomer.

It localises to the cytoplasm. The enzyme catalyses L-lysyl-[lipoyl-carrier protein] + (R)-lipoate + ATP = N(6)-[(R)-lipoyl]-L-lysyl-[lipoyl-carrier protein] + AMP + diphosphate + H(+). It functions in the pathway protein modification; protein lipoylation via exogenous pathway; protein N(6)-(lipoyl)lysine from lipoate: step 1/2. The protein operates within protein modification; protein lipoylation via exogenous pathway; protein N(6)-(lipoyl)lysine from lipoate: step 2/2. In terms of biological role, catalyzes both the ATP-dependent activation of exogenously supplied lipoate to lipoyl-AMP and the transfer of the activated lipoyl onto the lipoyl domains of lipoate-dependent enzymes. This Escherichia coli O81 (strain ED1a) protein is Lipoate-protein ligase A.